The following is a 37-amino-acid chain: Large ribosomal subunit protein bL36c (37 aa).

This sequence belongs to the bacterial ribosomal protein bL36 family.

The protein localises to the plastid. It is found in the organellar chromatophore. This chain is Large ribosomal subunit protein bL36c, found in Paulinella chromatophora.